The following is an 883-amino-acid chain: Phosphoenolpyruvate carboxylase (883 aa).

Catalysis depends on residues His-138 and Lys-546.

This sequence belongs to the PEPCase type 1 family. It depends on Mg(2+) as a cofactor.

It carries out the reaction oxaloacetate + phosphate = phosphoenolpyruvate + hydrogencarbonate. Functionally, forms oxaloacetate, a four-carbon dicarboxylic acid source for the tricarboxylic acid cycle. This Escherichia coli O45:K1 (strain S88 / ExPEC) protein is Phosphoenolpyruvate carboxylase.